Here is a 673-residue protein sequence, read N- to C-terminus: Ribonucleoprotein PTB-binding 2 (673 aa).

Residues 1-17 show a composition bias toward gly residues; that stretch reads MAARGGGAGGAGSGSGP. The segment at 1–34 is disordered; it reads MAARGGGAGGAGSGSGPSAGTAGEAAEPALRPGE. The span at 18-29 shows a compositional bias: low complexity; sequence SAGTAGEAAEPA. RRM domains lie at 58–129, 131–209, and 220–298; these read RKIL…LQPT, ALLC…WMDV, and KCLC…FCAP. A disordered region spans residues 481-549; that stretch reads QLPAGQAGPG…KGTEVASKNQ (69 aa). Residues 499–512 are compositionally biased toward low complexity; the sequence is SASVSISEASFSGS. The span at 529–549 shows a compositional bias: polar residues; sequence TGNQKTPQSQPKGTEVASKNQ.

Interacts with PTBP1 and RAVER1. In terms of tissue distribution, expressed throughout embryogenesis. Detected at low levels in adult lung, brain and kidney, but not in the other tissues tested.

The protein resides in the nucleus. It localises to the cytoplasm. In terms of biological role, may bind single-stranded nucleic acids. This is Ribonucleoprotein PTB-binding 2 (Raver2) from Mus musculus (Mouse).